The following is a 638-amino-acid chain: Probable lysine-specific demethylase 4F (638 aa).

One can recognise a JmjN domain in the interval 15-57 (IMTFYPTMEEFADFNTYVAYMESQGAHRAGLAKVIPPKEWKAR). Residue Tyr-133 participates in 2-oxoglutarate binding. One can recognise a JmjC domain in the interval 143–309 (EESTKQWNLG…YGKVASQCSC (167 aa)). Fe cation-binding residues include His-189 and Glu-191. Asn-199 and Lys-207 together coordinate 2-oxoglutarate. Zn(2+) contacts are provided by Cys-235 and His-241. Lys-242 serves as a coordination point for 2-oxoglutarate. His-277 is a Fe cation binding site. Residues Cys-307 and Cys-309 each contribute to the Zn(2+) site. The interval 426–474 (PCRGCGRGRGRGRGRGRRPRELGTEETTVQSAAKRRLSVGTGSRAPGRK) is disordered. Residues 431–443 (GRGRGRGRGRGRR) show a composition bias toward basic residues.

This sequence belongs to the JHDM3 histone demethylase family. It depends on Fe(2+) as a cofactor.

It localises to the nucleus. It catalyses the reaction N(6),N(6),N(6)-trimethyl-L-lysyl(9)-[histone H3] + 2 2-oxoglutarate + 2 O2 = N(6)-methyl-L-lysyl(9)-[histone H3] + 2 formaldehyde + 2 succinate + 2 CO2. In terms of biological role, probable histone demethylase that specifically demethylates 'Lys-9' of histone H3, thereby playing a central role in histone code. In Homo sapiens (Human), this protein is Probable lysine-specific demethylase 4F.